Consider the following 422-residue polypeptide: Adenylosuccinate synthetase (422 aa).

GTP-binding positions include 11-17 (GDEGKGK) and 39-41 (GHT). The Proton acceptor role is filled by aspartate 12. Mg(2+) contacts are provided by aspartate 12 and glycine 39. IMP-binding positions include 12–15 (DEGK), 37–40 (NAGH), threonine 129, arginine 143, asparagine 220, threonine 235, and arginine 299. Histidine 40 serves as the catalytic Proton donor. 295–301 (VTTGRKR) contributes to the substrate binding site. GTP is bound by residues arginine 301, 327-329 (KLD), and 410-412 (GTG).

This sequence belongs to the adenylosuccinate synthetase family. In terms of assembly, homodimer. It depends on Mg(2+) as a cofactor.

It is found in the cytoplasm. The enzyme catalyses IMP + L-aspartate + GTP = N(6)-(1,2-dicarboxyethyl)-AMP + GDP + phosphate + 2 H(+). It participates in purine metabolism; AMP biosynthesis via de novo pathway; AMP from IMP: step 1/2. Functionally, plays an important role in the de novo pathway and in the salvage pathway of purine nucleotide biosynthesis. Catalyzes the first committed step in the biosynthesis of AMP from IMP. This Arthroderma otae (strain ATCC MYA-4605 / CBS 113480) (Microsporum canis) protein is Adenylosuccinate synthetase.